The primary structure comprises 241 residues: Ribose-5-phosphate isomerase A (241 aa).

Residues 29–32 (TGTT), 84–87 (DGAD), and 97–100 (KGGG) contribute to the substrate site. The Proton acceptor role is filled by glutamate 106. Lysine 124 contributes to the substrate binding site.

Belongs to the ribose 5-phosphate isomerase family. As to quaternary structure, homodimer.

The enzyme catalyses aldehydo-D-ribose 5-phosphate = D-ribulose 5-phosphate. Its pathway is carbohydrate degradation; pentose phosphate pathway; D-ribose 5-phosphate from D-ribulose 5-phosphate (non-oxidative stage): step 1/1. Functionally, catalyzes the reversible conversion of ribose-5-phosphate to ribulose 5-phosphate. This chain is Ribose-5-phosphate isomerase A, found in Thermoplasma volcanium (strain ATCC 51530 / DSM 4299 / JCM 9571 / NBRC 15438 / GSS1).